The chain runs to 1162 residues: PAN2-PAN3 deadenylation complex catalytic subunit PAN2 (1162 aa).

WD repeat units lie at residues 27 to 66 (AKEK…YTRH), 153 to 193 (NTVQ…VVKT), 196 to 233 (GHSC…NVYD), and 300 to 339 (HPCQ…TGFT). Residues 341–491 (TATTILEYPD…LMNYKPSNDR (151 aa)) form a linker region. Residues 401-443 (VPLPPKSSAASSSHTALSTSSDSRPNTARSGNPSSGGQKYRLL) are disordered. Residues 407 to 423 (SSAASSSHTALSTSSDS) show a composition bias toward low complexity. Residues 424–437 (RPNTARSGNPSSGG) show a composition bias toward polar residues. The 413-residue stretch at 492-904 (EVPPAFTKLQ…TPEIAIYSDA (413 aa)) folds into the USP domain. The 171-residue stretch at 956–1126 (VALDAEFVAL…IEDAYTALVL (171 aa)) folds into the Exonuclease domain. Asp-959, Glu-961, Asp-1068, and Asp-1119 together coordinate a divalent metal cation.

This sequence belongs to the peptidase C19 family. PAN2 subfamily. In terms of assembly, forms a heterotrimer with an asymmetric homodimer of the regulatory subunit PAN3 to form the poly(A)-nuclease (PAN) deadenylation complex. A divalent metal cation is required as a cofactor.

It localises to the cytoplasm. The catalysed reaction is Exonucleolytic cleavage of poly(A) to 5'-AMP.. Its activity is regulated as follows. Positively regulated by the regulatory subunit PAN3. Functionally, catalytic subunit of the poly(A)-nuclease (PAN) deadenylation complex, one of two cytoplasmic mRNA deadenylases involved in mRNA turnover. PAN specifically shortens poly(A) tails of RNA and the activity is stimulated by poly(A)-binding protein PAB1. PAN deadenylation is followed by rapid degradation of the shortened mRNA tails by the CCR4-NOT complex. Deadenylated mRNAs are then degraded by two alternative mechanisms, namely exosome-mediated 3'-5' exonucleolytic degradation, or deadenylation-dependent mRNA decaping and subsequent 5'-3' exonucleolytic degradation by XRN1. May also be involved in post-transcriptional maturation of mRNA poly(A) tails. The protein is PAN2-PAN3 deadenylation complex catalytic subunit PAN2 of Eremothecium gossypii (strain ATCC 10895 / CBS 109.51 / FGSC 9923 / NRRL Y-1056) (Yeast).